The chain runs to 316 residues: Na(+)-translocating NADH-quinone reductase subunit C (316 aa).

Residues 13 to 33 form a helical membrane-spanning segment; that stretch reads WYIILFIFVLSLIAGTLLSSV. Thr280 is subject to FMN phosphoryl threonine.

The protein belongs to the NqrC family. Composed of six subunits; NqrA, NqrB, NqrC, NqrD, NqrE and NqrF. It depends on FMN as a cofactor.

It localises to the cell inner membrane. It catalyses the reaction a ubiquinone + n Na(+)(in) + NADH + H(+) = a ubiquinol + n Na(+)(out) + NAD(+). Functionally, NQR complex catalyzes the reduction of ubiquinone-1 to ubiquinol by two successive reactions, coupled with the transport of Na(+) ions from the cytoplasm to the periplasm. NqrA to NqrE are probably involved in the second step, the conversion of ubisemiquinone to ubiquinol. In Chlamydia trachomatis serovar D (strain ATCC VR-885 / DSM 19411 / UW-3/Cx), this protein is Na(+)-translocating NADH-quinone reductase subunit C.